A 158-amino-acid chain; its full sequence is Small ribosomal subunit protein uS7 (158 aa).

This sequence belongs to the universal ribosomal protein uS7 family. In terms of assembly, part of the 30S ribosomal subunit. Contacts proteins S9 and S11.

One of the primary rRNA binding proteins, it binds directly to 16S rRNA where it nucleates assembly of the head domain of the 30S subunit. Is located at the subunit interface close to the decoding center, probably blocks exit of the E-site tRNA. This chain is Small ribosomal subunit protein uS7, found in Azobacteroides pseudotrichonymphae genomovar. CFP2.